A 309-amino-acid chain; its full sequence is Ribonuclease Z (309 aa).

Zn(2+) contacts are provided by histidine 61, histidine 63, aspartate 65, histidine 66, histidine 144, aspartate 212, and histidine 271. Catalysis depends on aspartate 65, which acts as the Proton acceptor.

It belongs to the RNase Z family. In terms of assembly, homodimer. Zn(2+) serves as cofactor.

The catalysed reaction is Endonucleolytic cleavage of RNA, removing extra 3' nucleotides from tRNA precursor, generating 3' termini of tRNAs. A 3'-hydroxy group is left at the tRNA terminus and a 5'-phosphoryl group is left at the trailer molecule.. Its function is as follows. Zinc phosphodiesterase, which displays some tRNA 3'-processing endonuclease activity. Probably involved in tRNA maturation, by removing a 3'-trailer from precursor tRNA. This chain is Ribonuclease Z, found in Clostridium acetobutylicum (strain ATCC 824 / DSM 792 / JCM 1419 / IAM 19013 / LMG 5710 / NBRC 13948 / NRRL B-527 / VKM B-1787 / 2291 / W).